The chain runs to 424 residues: Probable threonylcarbamoyladenosine tRNA methylthiotransferase (424 aa).

Positions 4-115 (IRVYIETFGC…APQAVRAASN (112 aa)) constitute an MTTase N-terminal domain. Cys13, Cys48, Cys79, Cys150, Cys154, and Cys157 together coordinate [4Fe-4S] cluster. Positions 136–365 (RSNPLIHIIP…EELKMRITEE (230 aa)) constitute a Radical SAM core domain. Residues 368 to 424 (RRLVGSFQEILVVERGRKGGFIGRTGSYIPVVTETGEPGSFRRVRIRDATGTYLLAD) form the TRAM domain.

Belongs to the methylthiotransferase family. CDKAL1 subfamily. The cofactor is [4Fe-4S] cluster.

It carries out the reaction N(6)-L-threonylcarbamoyladenosine(37) in tRNA + (sulfur carrier)-SH + AH2 + 2 S-adenosyl-L-methionine = 2-methylsulfanyl-N(6)-L-threonylcarbamoyladenosine(37) in tRNA + (sulfur carrier)-H + 5'-deoxyadenosine + L-methionine + A + S-adenosyl-L-homocysteine + 2 H(+). Catalyzes the methylthiolation of N6-threonylcarbamoyladenosine (t(6)A), leading to the formation of 2-methylthio-N6-threonylcarbamoyladenosine (ms(2)t(6)A) at position 37 in tRNAs that read codons beginning with adenine. The protein is Probable threonylcarbamoyladenosine tRNA methylthiotransferase of Methanothermobacter thermautotrophicus (strain ATCC 29096 / DSM 1053 / JCM 10044 / NBRC 100330 / Delta H) (Methanobacterium thermoautotrophicum).